The following is a 1227-amino-acid chain: Multifunctional 2-oxoglutarate metabolism enzyme (1227 aa).

The segment at 1–41 (MSSSPSPFGQNEWLVEEMYRKFRDDPSSVDPSWHEFLVDYS) is 2-oxoglutarate dehydrogenase E1, N-terminal part. A compositionally biased stretch (basic and acidic residues) spans 23-37 (RDDPSSVDPSWHEFL). Residues 23–102 (RDDPSSVDPS…SATPAKGDES (80 aa)) form a disordered region. The segment at 42 to 88 (PEPTTDSASNGRTTTAAPVTPPTPAPAPAPEPKAAPKPAAKTEAKPA) is linker. Residues 43-53 (EPTTDSASNGR) show a composition bias toward polar residues. Over residues 60 to 76 (VTPPTPAPAPAPEPKAA) the composition is skewed to pro residues. Residues 88 to 97 (AKPAKSATPA) are compositionally biased toward low complexity. The segment at 89–335 (KPAKSATPAK…LRTIHQLLLD (247 aa)) is succinyltransferase E2. The active-site Proton acceptor; for succinyltransferase activity is the H314. Positions 336–1227 (DDFFDEIFRE…QQEILDTAFG (892 aa)) are 2-oxoglutarate dehydrogenase E1, C-terminal part. R540 provides a ligand contact to thiamine diphosphate. 2 residues coordinate 2-oxoglutarate: H579 and S604. Positions 604, 606, 645, 646, 647, and 678 each coordinate thiamine diphosphate. D645 is a binding site for Mg(2+). Positions 678 and 680 each coordinate Mg(2+). A coiled-coil region spans residues 783–814 (DISMKEAEDALRDYQGQLERVFNEVRELEKHE). 2-oxoglutarate is bound at residue H1020. Acetyl-CoA is bound by residues T1038, R1054, K1089, S1092, Q1142, R1149, and R1150.

This sequence belongs to the 2-oxoacid dehydrogenase family. Kgd subfamily. Homodimer. Interacts with the FHA domain of unphosphorylated GarA. The 2-oxoglutarate dehydrogenase (ODH) complex contains multiple copies of three enzymatic components: 2-oxoglutarate dehydrogenase (E1), dihydrolipoamide succinyltransferase (E2) and lipoamide dehydrogenase (E3). Mg(2+) serves as cofactor. Requires thiamine diphosphate as cofactor.

It carries out the reaction glyoxylate + 2-oxoglutarate + H(+) = 2-hydroxy-3-oxoadipate + CO2. The enzyme catalyses 2-oxoglutarate + H(+) = succinate semialdehyde + CO2. The catalysed reaction is N(6)-[(R)-lipoyl]-L-lysyl-[protein] + 2-oxoglutarate + H(+) = N(6)-[(R)-S(8)-succinyldihydrolipoyl]-L-lysyl-[protein] + CO2. It catalyses the reaction N(6)-[(R)-dihydrolipoyl]-L-lysyl-[protein] + succinyl-CoA = N(6)-[(R)-S(8)-succinyldihydrolipoyl]-L-lysyl-[protein] + CoA. It functions in the pathway carbohydrate metabolism; tricarboxylic acid cycle; succinate from 2-oxoglutarate (transferase route): step 1/2. Its pathway is carbohydrate metabolism; tricarboxylic acid cycle; succinyl-CoA from 2-oxoglutarate (dehydrogenase route): step 1/1. With respect to regulation, alpha-ketoglutarate dehydrogenase and decarboxylase activities are inhibited by unphosphorylated GarA, and allosterically activated by acetyl-CoA, the main substrate of the TCA cycle. Both the phosphoadenosine and acetyl moieties of acetyl-CoA are important for activation because neither CoA nor the synthetic compound S-(2-acetamidoethyl)-ethanethioate (which mimics the terminal acetyl-phosphopantetheine group of acetyl-CoA) has an activation effect. Functionally, shows three enzymatic activities that share a first common step, the attack of thiamine-PP on 2-oxoglutarate (alpha-ketoglutarate, KG), leading to the formation of an enamine-thiamine-PP intermediate upon decarboxylation. Thus, displays KGD activity, catalyzing the decarboxylation from five-carbon 2-oxoglutarate to four-carbon succinate semialdehyde (SSA). Also catalyzes C-C bond formation between the activated aldehyde formed after decarboxylation of alpha-ketoglutarate and the carbonyl of glyoxylate (GLX), to yield 2-hydroxy-3-oxoadipate (HOA), which spontaneously decarboxylates to form 5-hydroxylevulinate (HLA). And is also a component of the 2-oxoglutarate dehydrogenase (ODH) complex, that catalyzes the overall conversion of 2-oxoglutarate to succinyl-CoA and CO(2). The KG decarboxylase and KG dehydrogenase reactions provide two alternative, tightly regulated, pathways connecting the oxidative and reductive branches of the TCA cycle. This is Multifunctional 2-oxoglutarate metabolism enzyme (kgd) from Mycolicibacterium smegmatis (strain ATCC 700084 / mc(2)155) (Mycobacterium smegmatis).